The sequence spans 117 residues: Protein RALF-like 32 (117 aa).

An N-terminal signal peptide occupies residues M1 to S26. Positions K27–E64 are cleaved as a propeptide — removed in mature form. N35 carries N-linked (GlcNAc...) asparagine glycosylation. Residues R77–C107 are disordered. 2 disulfide bridges follow: C82–C95 and C107–C113.

The protein belongs to the plant rapid alkalinization factor (RALF) family. In terms of processing, proteolytically cleaved, probably by S1P, a subtilisin-like serine protease (subtilase).

Its subcellular location is the secreted. Its function is as follows. Cell signaling peptide that may regulate plant stress, growth, and development. Mediates a rapid alkalinization of extracellular space by mediating a transient increase in the cytoplasmic Ca(2+) concentration leading to a calcium-dependent signaling events through a cell surface receptor and a concomitant activation of some intracellular mitogen-activated protein kinases. This chain is Protein RALF-like 32 (RALFL32), found in Arabidopsis thaliana (Mouse-ear cress).